The sequence spans 428 residues: Adenylosuccinate synthetase (428 aa).

GTP is bound by residues 12–18 (GDEGKGK) and 40–42 (GHT). The Proton acceptor role is filled by Asp-13. Mg(2+) contacts are provided by Asp-13 and Gly-40. IMP is bound by residues 13–16 (DEGK), 38–41 (NAGH), Thr-128, Arg-142, Gln-223, Thr-238, and Arg-302. The active-site Proton donor is the His-41. Residue 298 to 304 (TTTGRPR) participates in substrate binding. GTP-binding positions include Arg-304, 330–332 (SID), and 412–414 (SVG).

This sequence belongs to the adenylosuccinate synthetase family. In terms of assembly, homodimer. Requires Mg(2+) as cofactor.

The protein resides in the cytoplasm. It catalyses the reaction IMP + L-aspartate + GTP = N(6)-(1,2-dicarboxyethyl)-AMP + GDP + phosphate + 2 H(+). Its pathway is purine metabolism; AMP biosynthesis via de novo pathway; AMP from IMP: step 1/2. In terms of biological role, plays an important role in the de novo pathway of purine nucleotide biosynthesis. Catalyzes the first committed step in the biosynthesis of AMP from IMP. The polypeptide is Adenylosuccinate synthetase (Streptococcus pneumoniae serotype 2 (strain D39 / NCTC 7466)).